The chain runs to 431 residues: Neuronal pentraxin-2 (431 aa).

An N-terminal signal peptide occupies residues 1–15 (MLALLAASVALAVAA). N-linked (GlcNAc...) asparagine glycans are attached at residues asparagine 148 and asparagine 189. Residues 223–424 (DAFKVSLPLR…GASKWPVETC (202 aa)) enclose the Pentraxin (PTX) domain. Cysteine 253 and cysteine 313 are oxidised to a cystine. The Ca(2+) site is built by asparagine 277, glutamate 355, glutamine 356, aspartate 357, and glutamine 367. The N-linked (GlcNAc...) asparagine glycan is linked to asparagine 393.

Homooligomer or heterooligomer (probably pentamer) with neuronal pentraxin receptor (NPTXR). It depends on Ca(2+) as a cofactor. Brain, pancreas, liver, heart and skeletal muscle. Highest levels are seen in the testis.

It is found in the secreted. In terms of biological role, likely to play role in the modification of cellular properties that underlie long-term plasticity. Binds to agar matrix in a calcium-dependent manner. This chain is Neuronal pentraxin-2 (NPTX2), found in Homo sapiens (Human).